The following is a 348-amino-acid chain: Dihydroorotase (348 aa).

The Zn(2+) site is built by histidine 17 and histidine 19. Substrate contacts are provided by residues 19-21 (HLR) and asparagine 45. Zn(2+) is bound by residues lysine 103, histidine 140, and histidine 178. Residue lysine 103 is modified to N6-carboxylysine. Histidine 140 is a binding site for substrate. Substrate is bound at residue leucine 223. Residue aspartate 251 coordinates Zn(2+). Aspartate 251 is a catalytic residue. The substrate site is built by histidine 255 and alanine 267.

It belongs to the metallo-dependent hydrolases superfamily. DHOase family. Class II DHOase subfamily. As to quaternary structure, homodimer. The cofactor is Zn(2+).

It catalyses the reaction (S)-dihydroorotate + H2O = N-carbamoyl-L-aspartate + H(+). It functions in the pathway pyrimidine metabolism; UMP biosynthesis via de novo pathway; (S)-dihydroorotate from bicarbonate: step 3/3. Catalyzes the reversible cyclization of carbamoyl aspartate to dihydroorotate. This chain is Dihydroorotase, found in Salmonella arizonae (strain ATCC BAA-731 / CDC346-86 / RSK2980).